A 450-amino-acid chain; its full sequence is Serine--tRNA ligase, cytoplasmic (450 aa).

238-240 (TSE) contacts L-serine. Residues 271–273 (RRE) and Val287 each bind ATP. Position 294 (Glu294) interacts with L-serine. 358–361 (ELVS) is an ATP binding site. Position 396 (Thr396) interacts with L-serine.

This sequence belongs to the class-II aminoacyl-tRNA synthetase family. Type-1 seryl-tRNA synthetase subfamily. As to quaternary structure, homodimer. The tRNA molecule binds across the dimer.

The protein localises to the cytoplasm. It is found in the cytosol. It catalyses the reaction tRNA(Ser) + L-serine + ATP = L-seryl-tRNA(Ser) + AMP + diphosphate + H(+). Its function is as follows. Catalyzes the attachment of serine to tRNA(Ser) in a two-step reaction: serine is first activated by ATP to form Ser-AMP and then transferred to the acceptor end of tRNA(Ser). The protein is Serine--tRNA ligase, cytoplasmic of Schizosaccharomyces pombe (strain 972 / ATCC 24843) (Fission yeast).